The chain runs to 327 residues: DNA-directed RNA polymerase subunit alpha (327 aa).

The interval 1–233 (MQGSVTEFLK…EQLEAFVDLR (233 aa)) is alpha N-terminal domain (alpha-NTD). The segment at 247 to 327 (FDPVLLRPVD…NWPPLGFIDK (81 aa)) is alpha C-terminal domain (alpha-CTD).

It belongs to the RNA polymerase alpha chain family. As to quaternary structure, homodimer. The RNAP catalytic core consists of 2 alpha, 1 beta, 1 beta' and 1 omega subunit. When a sigma factor is associated with the core the holoenzyme is formed, which can initiate transcription.

It catalyses the reaction RNA(n) + a ribonucleoside 5'-triphosphate = RNA(n+1) + diphosphate. Its function is as follows. DNA-dependent RNA polymerase catalyzes the transcription of DNA into RNA using the four ribonucleoside triphosphates as substrates. The polypeptide is DNA-directed RNA polymerase subunit alpha (Baumannia cicadellinicola subsp. Homalodisca coagulata).